The primary structure comprises 569 residues: Urease subunit alpha (569 aa).

One can recognise a Urease domain in the interval 131–569; it reads GGIDTHIHFI…LPLAQRYLLL (439 aa). Ni(2+) is bound by residues histidine 136, histidine 138, and lysine 219. An N6-carboxylysine modification is found at lysine 219. Residue histidine 221 coordinates substrate. Positions 248 and 274 each coordinate Ni(2+). Histidine 322 (proton donor) is an active-site residue. Position 362 (aspartate 362) interacts with Ni(2+).

The protein belongs to the metallo-dependent hydrolases superfamily. Urease alpha subunit family. As to quaternary structure, heterotrimer of UreA (gamma), UreB (beta) and UreC (alpha) subunits. Three heterotrimers associate to form the active enzyme. It depends on Ni cation as a cofactor. Carboxylation allows a single lysine to coordinate two nickel ions.

Its subcellular location is the cytoplasm. The enzyme catalyses urea + 2 H2O + H(+) = hydrogencarbonate + 2 NH4(+). The protein operates within nitrogen metabolism; urea degradation; CO(2) and NH(3) from urea (urease route): step 1/1. The protein is Urease subunit alpha of Synechococcus sp. (strain CC9605).